Reading from the N-terminus, the 1407-residue chain is DNA-directed RNA polymerase subunit beta' (1407 aa).

Zn(2+) is bound by residues Cys70, Cys72, Cys85, and Cys88. Positions 460, 462, and 464 each coordinate Mg(2+). Zn(2+) contacts are provided by Cys814, Cys888, Cys895, and Cys898. Residue Lys972 is modified to N6-acetyllysine.

The protein belongs to the RNA polymerase beta' chain family. In terms of assembly, the RNAP catalytic core consists of 2 alpha, 1 beta, 1 beta' and 1 omega subunit. When a sigma factor is associated with the core the holoenzyme is formed, which can initiate transcription. It depends on Mg(2+) as a cofactor. Zn(2+) serves as cofactor.

The catalysed reaction is RNA(n) + a ribonucleoside 5'-triphosphate = RNA(n+1) + diphosphate. Its function is as follows. DNA-dependent RNA polymerase catalyzes the transcription of DNA into RNA using the four ribonucleoside triphosphates as substrates. This is DNA-directed RNA polymerase subunit beta' from Escherichia coli O6:H1 (strain CFT073 / ATCC 700928 / UPEC).